We begin with the raw amino-acid sequence, 380 residues long: Glycine betaine/carnitine/choline transport ATP-binding protein OpuCA (380 aa).

The ABC transporter domain maps to 2–236 (LKLEQVSKVY…PANEFVEEFI (235 aa)). 35 to 42 (GPSGCGKT) contributes to the ATP binding site. CBS domains follow at residues 255–314 (MNRT…VGDV) and 315–373 (YRSD…WGDE).

Belongs to the ABC transporter superfamily. The complex is composed of two ATP-binding proteins (OpuCA), two transmembrane proteins (OpuCB and OpuCD) and a solute-binding protein (OpuCC).

Binds cyclic di-AMP (c-di-AMP), which may regulate the transporter activity. Its function is as follows. Involved in a high affinity multicomponent binding-protein-dependent transport system for glycine betaine, carnitine and choline; probably responsible for energy coupling to the transport system. The protein is Glycine betaine/carnitine/choline transport ATP-binding protein OpuCA (opuCA) of Bacillus subtilis (strain 168).